The sequence spans 710 residues: Probable GTP diphosphokinase RSH2, chloroplastic (710 aa).

Residues 1 to 63 (MVVATTIALY…SSLFSSASVK (63 aa)) constitute a chloroplast transit peptide. The region spanning 233 to 337 (YLQHCVETAM…IKLADRLHNM (105 aa)) is the HD domain.

It belongs to the RelA/SpoT family.

Its subcellular location is the plastid. It localises to the chloroplast. The enzyme catalyses GTP + ATP = guanosine 3'-diphosphate 5'-triphosphate + AMP. Probable ppGpp (guanosine 3'-diphosphate 5'-diphosphate) synthetase that may be involved in a rapid plant ppGpp-mediated response to pathogens and other stresses. The polypeptide is Probable GTP diphosphokinase RSH2, chloroplastic (RSH2) (Arabidopsis thaliana (Mouse-ear cress)).